The sequence spans 492 residues: MATGRAKNTKWARWLSTAGLIIVVTLPATTMAAERTGLKATAWKPLCKLTTELSKVSGEMLNKGQEVISNIQKIKAAEYKVSIYLAKNPETQALQQSTLLRGYFARKTNGGLESYKTMGLATQIRSARAAAYLKGSIDEFLNLLESLKGGSENKCLVTTNADTAATRRETKLDDQECALSMPETKPEAATRTELTQTGYPNLQHGGGGTANTFQPTTSTGTCKLLSGHSTNGYPTTSALDTTAKVLAGYMTIPNTQVEATLANMQAMGNGHKATAPAWHEAWEARNREAKAKDLAYTNETGNLDTQPTLKALVKTLLLPKDNTEHNAEATKLEALFGGLAADKTKTYLDMVDAEIIPAGIAGRTTEAPLGKIHDTVELGDILSNYEMIAAQNVVTLKKNLDAVSKKQQTESAENKEKICNAAKDNQKACENLKEKGCVFNTESNKCELKKDVKEKLEKESKETEGKDEKANTTGSNSFLIHKAPLLLAFLLF.

The signal sequence occupies residues 1–32 (MATGRAKNTKWARWLSTAGLIIVVTLPATTMA). Disulfide bonds link cysteine 47–cysteine 177 and cysteine 155–cysteine 222. Asparagine 298 and asparagine 471 each carry an N-linked (GlcNAc...) asparagine glycan. Serine 475 carries the GPI-anchor amidated serine lipid modification. Positions 476-492 (NSFLIHKAPLLLAFLLF) are cleaved as a propeptide — removed in mature form.

The protein localises to the cell membrane. VSG forms a coat on the surface of the parasite. The trypanosome evades the immune response of the host by expressing a series of antigenically distinct VSGs from an estimated 1000 VSG genes. The chain is Variant surface glycoprotein MITAT 1.1 from Trypanosoma brucei brucei.